The chain runs to 603 residues: Beta-hexosaminidase (603 aa).

An N-terminal signal peptide occupies residues 1-19 (MAYFRLYAVLLAVASSVAA). Active-site charge relay system residues include D225, H278, and E349. C293 and C354 form a disulfide bridge. A glycan (N-linked (GlcNAc...) asparagine) is linked at N356. Residues C451 and C486 are joined by a disulfide bond. N-linked (GlcNAc...) asparagine glycosylation is found at N503 and N528. C586 and C593 are oxidised to a cystine.

Belongs to the glycosyl hydrolase 20 family. As to quaternary structure, homodimer.

It localises to the secreted. It catalyses the reaction Hydrolysis of terminal non-reducing N-acetyl-D-hexosamine residues in N-acetyl-beta-D-hexosaminides.. Part of the binary chitinolytic system. Involved in hydrolysis of chitobiose and higher chito-oligomers (produced from cell wall chitin by endochitinases), thus contributing to the formation of germ tubes, fruit-bodies and septa during hyphenation. Hydrolyzes synthetic substrates p-nitrophenyl-beta-N-acetyl-glucosamine (pNP-beta-GlcNAc), p-nitrophenyl-beta-N-acetyl-galactosamine (pNP-beta-GalNAc) and 5-bromo-4-chloro-3-indoyl-beta-D-N-glucosaminide (X-GlcNAc). The protein is Beta-hexosaminidase of Emericella nidulans (Aspergillus nidulans).